Here is a 540-residue protein sequence, read N- to C-terminus: MKIMKFIFITGGVISSLGKGITAASLGRLLKARGFKVNMIKIDPYLQIDAGTMSPYEHGEVFVTEDGGESDLDLGHYERFIDENLTKNNNITTGKIYWSVLTKERKGEYLGKTVQVIPHITNEIKDWIKNLGEGYDITIVEIGGTVGDIESLPFLEAIRQFKKDVGKENVLYIHVSLLPYIRAAGELKTKPTQHSVKELRSIGIQPDILICRTEMPISDKIREKLALFCDVDKEAVIEARDARTIYEVPLNLEKEGLGKLVTKKLNLPDREPDLDEWRKFVDRVINPLNEVTIGIVGKYVELKDAYLSITEALIHAGAKNDTKVNINWIHSERLESEEFEELLDRYREDNQLDGILVPGGFGDRGVEGKINAIKYARENDIPFLGICMGMQCAVIEFARNVCGLEGANSTEFDENTKYPVVDLLPEQKEIDAKGGTMRLGAYPAILMEGTLAYKLYGRKEVYERHRHRYEVNPEYHEILENHGLTISGKSPDGRLAEFIEISKNRYFIATQAHPEFKSRPNKPHPLFDGLVRASLGEKIK.

The tract at residues 1 to 267 (MKIMKFIFIT…GKLVTKKLNL (267 aa)) is amidoligase domain. Serine 15 serves as a coordination point for CTP. Serine 15 lines the UTP pocket. 16 to 21 (SLGKGI) contributes to the ATP binding site. L-glutamine is bound at residue tyrosine 56. ATP is bound at residue aspartate 73. Mg(2+)-binding residues include aspartate 73 and glutamate 141. Residues 148–150 (DIE), 188–193 (KTKPTQ), and lysine 224 each bind CTP. UTP-binding positions include 188–193 (KTKPTQ) and lysine 224. Residue 240-242 (RDA) participates in ATP binding. A Glutamine amidotransferase type-1 domain is found at 292 to 540 (TIGIVGKYVE…VRASLGEKIK (249 aa)). Glycine 360 lines the L-glutamine pocket. The active-site Nucleophile; for glutamine hydrolysis is the cysteine 387. L-glutamine is bound by residues 388-391 (MGMQ), glutamate 411, and arginine 468. Residues histidine 513 and glutamate 515 contribute to the active site.

This sequence belongs to the CTP synthase family. As to quaternary structure, homotetramer.

It carries out the reaction UTP + L-glutamine + ATP + H2O = CTP + L-glutamate + ADP + phosphate + 2 H(+). The catalysed reaction is L-glutamine + H2O = L-glutamate + NH4(+). The enzyme catalyses UTP + NH4(+) + ATP = CTP + ADP + phosphate + 2 H(+). The protein operates within pyrimidine metabolism; CTP biosynthesis via de novo pathway; CTP from UDP: step 2/2. With respect to regulation, allosterically activated by GTP, when glutamine is the substrate; GTP has no effect on the reaction when ammonia is the substrate. The allosteric effector GTP functions by stabilizing the protein conformation that binds the tetrahedral intermediate(s) formed during glutamine hydrolysis. Inhibited by the product CTP, via allosteric rather than competitive inhibition. Catalyzes the ATP-dependent amination of UTP to CTP with either L-glutamine or ammonia as the source of nitrogen. Regulates intracellular CTP levels through interactions with the four ribonucleotide triphosphates. The sequence is that of CTP synthase from Methanocaldococcus jannaschii (strain ATCC 43067 / DSM 2661 / JAL-1 / JCM 10045 / NBRC 100440) (Methanococcus jannaschii).